Reading from the N-terminus, the 78-residue chain is Exodeoxyribonuclease 7 small subunit (78 aa).

The protein belongs to the XseB family. Heterooligomer composed of large and small subunits.

It localises to the cytoplasm. The enzyme catalyses Exonucleolytic cleavage in either 5'- to 3'- or 3'- to 5'-direction to yield nucleoside 5'-phosphates.. Its function is as follows. Bidirectionally degrades single-stranded DNA into large acid-insoluble oligonucleotides, which are then degraded further into small acid-soluble oligonucleotides. The polypeptide is Exodeoxyribonuclease 7 small subunit (Oceanobacillus iheyensis (strain DSM 14371 / CIP 107618 / JCM 11309 / KCTC 3954 / HTE831)).